Consider the following 153-residue polypeptide: MAEHLMSDVPFWQSKTLDEMSDAEWESLCDGCGQCCLHKLMDEDTDEIYFTNVACRQLNIKTCQCRNYERRFEFEPDCIKLTRENLPTFEWLPMTCAYRLLAEGKGLPAWHPLLTGSKAAMHGERISVRHIAVKESEVIDWQDHILNKPDWAQ.

The protein belongs to the UPF0260 family.

This is UPF0260 protein YcgN from Escherichia coli O6:K15:H31 (strain 536 / UPEC).